A 485-amino-acid polypeptide reads, in one-letter code: NADH-quinone oxidoreductase subunit N (485 aa).

Helical transmembrane passes span leucine 8–isoleucine 28, phenylalanine 35–valine 55, glycine 71–alanine 91, phenylalanine 105–leucine 125, alanine 127–phenylalanine 147, tyrosine 159–alanine 179, leucine 203–phenylalanine 223, proline 235–methionine 255, isoleucine 271–glutamine 291, leucine 297–glutamine 317, valine 326–leucine 346, alanine 373–isoleucine 393, tryptophan 408–valine 430, and isoleucine 455–isoleucine 475.

It belongs to the complex I subunit 2 family. In terms of assembly, NDH-1 is composed of 13 different subunits. Subunits NuoA, H, J, K, L, M, N constitute the membrane sector of the complex.

It localises to the cell inner membrane. The enzyme catalyses a quinone + NADH + 5 H(+)(in) = a quinol + NAD(+) + 4 H(+)(out). NDH-1 shuttles electrons from NADH, via FMN and iron-sulfur (Fe-S) centers, to quinones in the respiratory chain. The immediate electron acceptor for the enzyme in this species is believed to be ubiquinone. Couples the redox reaction to proton translocation (for every two electrons transferred, four hydrogen ions are translocated across the cytoplasmic membrane), and thus conserves the redox energy in a proton gradient. The protein is NADH-quinone oxidoreductase subunit N of Citrobacter koseri (strain ATCC BAA-895 / CDC 4225-83 / SGSC4696).